Here is a 157-residue protein sequence, read N- to C-terminus: Regenerating islet-derived protein 4 (157 aa).

The N-terminal stretch at 1–22 is a signal peptide; that stretch reads MASKCVRLLLLLSWVAGPEVLS. Cysteines 29 and 40 form a disulfide. Residues 36-154 form the C-type lectin domain; that stretch reads YRSHCYGYFR…CTKRQHFLCK (119 aa). N49, N62, and N101 each carry an N-linked (GlcNAc...) asparagine glycan. 2 disulfide bridges follow: C57-C153 and C128-C145. A carbohydrate is bound by residues 97 to 101 and 134 to 136; these read DPQKN and KDK.

It is found in the secreted. Calcium-independent lectin displaying mannose-binding specificity and able to maintain carbohydrate recognition activity in an acidic environment. May be involved in inflammatory and metaplastic responses of the gastrointestinal epithelium. The polypeptide is Regenerating islet-derived protein 4 (Reg4) (Rattus norvegicus (Rat)).